Reading from the N-terminus, the 108-residue chain is Hydrogenase expression/formation protein HupN (108 aa).

A disordered region spans residues 88-108 (REPQLPPHLQAQLPPKEPNSP).

The protein belongs to the HupF/HypC family.

The polypeptide is Hydrogenase expression/formation protein HupN (hupN) (Azotobacter chroococcum mcd 1).